Here is a 621-residue protein sequence, read N- to C-terminus: DnaJ homolog subfamily C member 2 (621 aa).

Methionine 1 bears the N-acetylmethionine mark. Serine 47, serine 49, serine 60, and serine 63 each carry phosphoserine. Residues 88-161 (DHYAVLGLGH…VKRRAFNSVD (74 aa)) form the J domain. Residues 160–250 (VDPTFDNSVP…RDERKWIEKQ (91 aa)) are ZRF1-UBD. A Phosphoserine modification is found at serine 183. Disordered regions lie at residues 287–312 (GKAKKEAEKRAKAEARRKEQEAKEKQ) and 426–453 (KEEADARMRQASKNAEKSTGGSGSGSKN). SANT domains follow at residues 449–511 (SGSK…KLDP) and 549–604 (IDSI…EMVK).

In terms of assembly, component of ribosome-associated complex (RAC), a heterodimer composed of Hsp70/DnaK-type chaperone HSPA14 and Hsp40/DnaJ-type chaperone DNAJC2. Interacts (via ZRF1-UBD region) with ID1. Post-translationally, phosphorylated in M (mitotic) phase.

The protein localises to the nucleus. Its subcellular location is the cytoplasm. It is found in the cytosol. Its function is as follows. Acts both as a chaperone in the cytosol and as a chromatin regulator in the nucleus. When cytosolic, acts as a molecular chaperone: component of the ribosome-associated complex (RAC), a complex involved in folding or maintaining nascent polypeptides in a folding-competent state. In the RAC complex, stimulates the ATPase activity of the ribosome-associated pool of Hsp70-type chaperones HSPA14 that bind to the nascent polypeptide chain. When nuclear, mediates the switching from polycomb-repressed genes to an active state: specifically recruited at histone H2A ubiquitinated at 'Lys-119' (H2AK119ub), and promotes the displacement of the polycomb PRC1 complex from chromatin, thereby facilitating transcription activation. This chain is DnaJ homolog subfamily C member 2 (Dnajc2), found in Rattus norvegicus (Rat).